A 107-amino-acid chain; its full sequence is Iron-sulfur cluster assembly protein CyaY (107 aa).

Belongs to the frataxin family.

In terms of biological role, involved in iron-sulfur (Fe-S) cluster assembly. May act as a regulator of Fe-S biogenesis. This is Iron-sulfur cluster assembly protein CyaY from Thioalkalivibrio sulfidiphilus (strain HL-EbGR7).